The sequence spans 599 residues: Elongation factor 4 (599 aa).

The tr-type G domain occupies 2 to 184 (NHIRNFSIIA…RLVRDIPAPE (183 aa)). GTP contacts are provided by residues 14–19 (DHGKST) and 131–134 (NKID).

This sequence belongs to the TRAFAC class translation factor GTPase superfamily. Classic translation factor GTPase family. LepA subfamily.

The protein resides in the cell inner membrane. The enzyme catalyses GTP + H2O = GDP + phosphate + H(+). Its function is as follows. Required for accurate and efficient protein synthesis under certain stress conditions. May act as a fidelity factor of the translation reaction, by catalyzing a one-codon backward translocation of tRNAs on improperly translocated ribosomes. Back-translocation proceeds from a post-translocation (POST) complex to a pre-translocation (PRE) complex, thus giving elongation factor G a second chance to translocate the tRNAs correctly. Binds to ribosomes in a GTP-dependent manner. The sequence is that of Elongation factor 4 from Yersinia pestis (strain Pestoides F).